Reading from the N-terminus, the 1259-residue chain is Neural cell adhesion molecule L1 (1259 aa).

The first 19 residues, 1-19, serve as a signal peptide directing secretion; the sequence is MVMMLWYVLPLLLCSPCLL. Over 20-1122 the chain is Extracellular; sequence IQIPDEYKGH…VSTTGSFASE (1103 aa). 6 Ig-like C2-type domains span residues 35–128, 138–225, 239–327, 332–419, 424–506, and 517–600; these read PVIT…HEIQ, PKET…EPID, PRLL…YYVT, PYWL…AYIY, PARI…NNVT, and TQIT…DEVE. Cystine bridges form between Cys57–Cys113 and Cys157–Cys208. N-linked (GlcNAc...) asparagine glycosylation is found at Asn100, Asn202, Asn246, and Asn293. Disulfide bonds link Cys263–Cys311 and Cys353–Cys403. N-linked (GlcNAc...) asparagine glycans are attached at residues Asn432, Asn489, and Asn504. A disulfide bridge links Cys447 with Cys496. An intrachain disulfide couples Cys538 to Cys590. 2 short sequence motifs (cell attachment site) span residues 553-555 and 562-564; these read RGD. Fibronectin type-III domains are found at residues 613-711, 716-809, 811-916, 919-1014, and 1016-1116; these read PVPH…TPEA, NPVD…SGED, PQVS…PEGV, HPEA…MALF, and KPDF…VSTT. The N-linked (GlcNAc...) asparagine glycan is linked to Asn670. The disordered stretch occupies residues 697-724; sequence GEPSPVSETVVTPEAAPEKNPVDVRGEG. The span at 712 to 724 shows a compositional bias: basic and acidic residues; the sequence is APEKNPVDVRGEG. 11 N-linked (GlcNAc...) asparagine glycosylation sites follow: Asn725, Asn776, Asn824, Asn848, Asn875, Asn968, Asn978, Asn1021, Asn1029, Asn1072, and Asn1106. Residues 1123–1145 traverse the membrane as a helical segment; that stretch reads GWFIAFVSAIILLLLILLILCFI. Over 1146 to 1259 the chain is Cytoplasmic; it reads KRSKGGKYSV…SPINPAVALE (114 aa). Ser1165, Arg1179, Ser1180, Ser1183, Ser1196, Ser1245, Ser1246, and Ser1250 each carry phosphoserine. Disordered regions lie at residues 1182-1209 and 1228-1259; these read ESDN…SDDS and IGQY…VALE. A compositionally biased stretch (polar residues) spans 1243–1252; the sequence is NDSSGATSPI.

Belongs to the immunoglobulin superfamily. L1/neurofascin/NgCAM family. Interacts with SHTN1; the interaction occurs in axonal growth cones. Interacts with isoform 2 of BSG. In terms of tissue distribution, isoform 2 is predominantly found in the brain, while isoform 1 is found in the peripheral nervous system.

It localises to the cell membrane. The protein localises to the cell projection. Its subcellular location is the growth cone. Neural cell adhesion molecule involved in the dynamics of cell adhesion and in the generation of transmembrane signals at tyrosine kinase receptors. During brain development, critical in multiple processes, including neuronal migration, axonal growth and fasciculation, and synaptogenesis. In the mature brain, plays a role in the dynamics of neuronal structure and function, including synaptic plasticity. This is Neural cell adhesion molecule L1 (L1cam) from Rattus norvegicus (Rat).